Consider the following 407-residue polypeptide: Imidazolonepropionase (407 aa).

Positions 68 and 70 each coordinate Fe(3+). His-68 and His-70 together coordinate Zn(2+). 4-imidazolone-5-propanoate is bound by residues Arg-77, Tyr-140, and His-173. Tyr-140 is a binding site for N-formimidoyl-L-glutamate. Fe(3+) is bound at residue His-238. Residue His-238 participates in Zn(2+) binding. 4-imidazolone-5-propanoate is bound at residue Gln-241. A Fe(3+)-binding site is contributed by Asp-313. Asp-313 contacts Zn(2+). N-formimidoyl-L-glutamate contacts are provided by Asn-315 and Gly-317. Thr-318 is a binding site for 4-imidazolone-5-propanoate.

This sequence belongs to the metallo-dependent hydrolases superfamily. HutI family. Requires Zn(2+) as cofactor. Fe(3+) serves as cofactor.

It localises to the cytoplasm. The enzyme catalyses 4-imidazolone-5-propanoate + H2O = N-formimidoyl-L-glutamate. It participates in amino-acid degradation; L-histidine degradation into L-glutamate; N-formimidoyl-L-glutamate from L-histidine: step 3/3. Functionally, catalyzes the hydrolytic cleavage of the carbon-nitrogen bond in imidazolone-5-propanoate to yield N-formimidoyl-L-glutamate. It is the third step in the universal histidine degradation pathway. The polypeptide is Imidazolonepropionase (Burkholderia mallei (strain ATCC 23344)).